Here is a 106-residue protein sequence, read N- to C-terminus: Small ribosomal subunit protein uS10 (106 aa).

Belongs to the universal ribosomal protein uS10 family. As to quaternary structure, part of the 30S ribosomal subunit.

Functionally, involved in the binding of tRNA to the ribosomes. The sequence is that of Small ribosomal subunit protein uS10 from Pyrobaculum calidifontis (strain DSM 21063 / JCM 11548 / VA1).